Here is an 899-residue protein sequence, read N- to C-terminus: Pre-mRNA-splicing factor 6 (899 aa).

The segment at 1-65 (MERPSFLDQE…QSQPKDDEDD (65 aa)) is disordered. The segment covering 28–51 (TKEKQVVSNDDKGRRIPKRYRENL) has biased composition (basic and acidic residues). HAT repeat units follow at residues 221 to 253 (EDLQ…LEEK), 255 to 287 (RKFS…LHES), 289 to 318 (VHYC…DLES), 319 to 350 (TTVN…FEAD), 352 to 381 (AQVI…LQSY), 383 to 414 (NAKM…RNNP), 493 to 525 (PHSK…ATES), 545 to 578 (NSDD…DTRQ), 608 to 645 (LQLD…FLRY), 648 to 680 (LNEE…IYHS), 682 to 714 (GNIE…IDEI), 751 to 783 (GNLD…LFKH), and 819 to 851 (AQYE…TYAR).

As to quaternary structure, component of the U4/U6-U5 tri-snRNP complex composed of the U4, U6 and U5 snRNAs and at least PRP3, PRP4, PRP6, PRP8, PRP18, PRP31, PRP38, SNU13, SNU23, SNU66, SNU114, SPP381, SMB1, SMD1, SMD2, SMD3, SMX2, SMX3, LSM2, LSM3, LSM4, LSM5, LSM6, LSM7, LSM8, BRR2 and DIB1.

Its subcellular location is the nucleus. Its function is as follows. Participates in pre-mRNA splicing. Part of the U4/U5/U6 tri-snRNP complex, one of the building blocks of the spliceosome. This chain is Pre-mRNA-splicing factor 6 (PRP6), found in Saccharomyces cerevisiae (strain ATCC 204508 / S288c) (Baker's yeast).